The primary structure comprises 699 residues: LMBR1 domain-containing protein 2 homolog (699 aa).

Residues M1 to Y3 are Extracellular-facing. A helical membrane pass occupies residues L4 to I26. Residues P27 to H30 are Cytoplasmic-facing. A helical transmembrane segment spans residues I31–I51. The Extracellular portion of the chain corresponds to P52–R106. N76 is a glycosylation site (N-linked (GlcNAc...) asparagine). The chain crosses the membrane as a helical span at residues I107–L127. Topologically, residues K128 to E144 are cytoplasmic. The chain crosses the membrane as a helical span at residues N145–V165. Topologically, residues K166–S181 are extracellular. Residues A182–V202 traverse the membrane as a helical segment. Residues P203–K381 lie on the Cytoplasmic side of the membrane. Residues T382 to F402 traverse the membrane as a helical segment. Over S403 to T426 the chain is Extracellular. A helical membrane pass occupies residues I427–L447. Topologically, residues R448–S467 are cytoplasmic. A helical transmembrane segment spans residues L468–G488. Over L489–D514 the chain is Extracellular. The helical transmembrane segment at V515–C535 threads the bilayer. The Cytoplasmic segment spans residues L536 to V699. Residues E564 to D592 are a coiled coil. A disordered region spans residues F669–V699.

It belongs to the LIMR family.

The protein resides in the membrane. The chain is LMBR1 domain-containing protein 2 homolog from Drosophila pseudoobscura pseudoobscura (Fruit fly).